Here is a 456-residue protein sequence, read N- to C-terminus: Decaprenyl-diphosphate synthase (456 aa).

Isopentenyl diphosphate is bound by residues K183, R186, and H216. Mg(2+)-binding residues include D223 and D227. Residue R233 coordinates isopentenyl diphosphate.

This sequence belongs to the FPP/GGPP synthase family. Mg(2+) is required as a cofactor.

The protein localises to the mitochondrion. The enzyme catalyses 7 isopentenyl diphosphate + (2E,6E)-farnesyl diphosphate = all-trans-decaprenyl diphosphate + 7 diphosphate. It functions in the pathway cofactor biosynthesis; ubiquinone biosynthesis. Supplies decaprenyl diphosphate, the precursor for the side chain of the isoprenoid quinones ubiquinone-10. In Dictyostelium discoideum (Social amoeba), this protein is Decaprenyl-diphosphate synthase (coq1).